Reading from the N-terminus, the 290-residue chain is Acetyl-coenzyme A carboxylase carboxyl transferase subunit beta (290 aa).

In terms of domain architecture, CoA carboxyltransferase N-terminal spans 30-290 (IMTKCPKCKK…HAGQEVNKDA (261 aa)). Positions 34, 37, 53, and 56 each coordinate Zn(2+). The C4-type zinc finger occupies 34-56 (CPKCKKIMYTKELSENLNVCFNC).

The protein belongs to the AccD/PCCB family. In terms of assembly, acetyl-CoA carboxylase is a heterohexamer composed of biotin carboxyl carrier protein (AccB), biotin carboxylase (AccC) and two subunits each of ACCase subunit alpha (AccA) and ACCase subunit beta (AccD). The cofactor is Zn(2+).

It localises to the cytoplasm. The catalysed reaction is N(6)-carboxybiotinyl-L-lysyl-[protein] + acetyl-CoA = N(6)-biotinyl-L-lysyl-[protein] + malonyl-CoA. It participates in lipid metabolism; malonyl-CoA biosynthesis; malonyl-CoA from acetyl-CoA: step 1/1. Its function is as follows. Component of the acetyl coenzyme A carboxylase (ACC) complex. Biotin carboxylase (BC) catalyzes the carboxylation of biotin on its carrier protein (BCCP) and then the CO(2) group is transferred by the transcarboxylase to acetyl-CoA to form malonyl-CoA. This Staphylococcus carnosus (strain TM300) protein is Acetyl-coenzyme A carboxylase carboxyl transferase subunit beta.